Consider the following 1226-residue polypeptide: MRSRSGSGVRLDRILFMVEQTICSHQNPITALFANQKDFPGHAWVRDNVYIAQALWALYRAYMKCADFDEDLTKAKELGFTCVKMMQSILECLMRQAEKVELFKKYQRPLDALHSKFAVGTKGTVCGDADWGHLQMDAISLYLLTLAQITASGLQVVRNFDEVAFIQNLVYYIETGYRTPDYGVWERGDKTNQGIRELNASSIGMVKAALQALNDVGDLFVDGSRGSVVHVLPDEIEQCSAVLSSMLPRESFSKETDAALLGIISYPAFCVEDPELVSQTRETITQRLLGKYGCRRFMRDGYKTVLEDASRLYYNKSELQQFEDIECEWPIFLCYLILDAMYSKDDDAVEAYWRQLESVLVLSDKGFRLVPELYVVLKEHVSAEKAHPGTQDRVPGGATPFLWAQSLYVIICLLYEGFLLPAELDPLSRRLSVYEKRPPCEVQVTVLAESLDVQRELRAHDIHVQCVDEIDPVFTILPASALGQLLAKIGESKKLNLSGRPLDRPIGLLSTSRLYQIGNKFVIFTPQFMDSRRSHLMYDIRILTDEWSSELQYIYASWNSVSISGRPLVVLVITQGMLSTEGLSHFSNIHLNRHMKSTVIGAIKKINTGYLSGARVVMKDLSDFFRTTAVSKMEFRDKSAEDTLRSVAAEKVQFTLLTEDATEAKNEKITTPRGPRTLRRGESVKDRSAYTAVHKASMRHRSIALDSNDADLMKLRLAYKSRPRDLQDMDSTYQSPPPTQTPLGLVKEHSSGELRQQLLKTTRRGAENETTHRDLTAEQMNEMKADDLLDLVNETTVLEEQISIVHCLWMKFGPDYDTELGCQHITVRMLMEEVHTKACEAREWALVRLTAGLLKKQLEELSKAVTHLLVRQKQITVGIASKKEEVITCPKTNEELEKIMNRAYGDDANSFTLAQEIIVYLGSLVRTEPKLFLEMFRLRIGLIIQVLASELSRLRNISGAEAAETLLTVSPFELKSMIFSLLSGRLLEEYAEDGIHYSDTIRETRTGIGSFRRQIEERKSLRKSTRSVGGLEIPKEEDEDEEADEDDFQFGIWLRHRRIDGALNRVPNGFYAILWDTVHKMPHGVKINDTVLHWGLTQEMTRKEIKFALESEEALNRIAEPEYRELVVETLWLLGRLEKLVLLEQPNIPRDRPLDVDHILHVANQIFVDHNKHLETIVMECCASSNPNNTRCDGARNICKHFYDSAPAGEYGTSHYIIRALMQLYS.

A disordered region spans residues 666 to 688; that stretch reads NEKITTPRGPRTLRRGESVKDRS. Over residues 679–688 the composition is skewed to basic and acidic residues; the sequence is RRGESVKDRS.

The protein belongs to the phosphorylase b kinase regulatory chain family.

It functions in the pathway glycan biosynthesis; glycogen metabolism. In terms of biological role, phosphorylase b kinase catalyzes the phosphorylation of serine in certain substrates, including troponin I. The alpha chain may bind calmodulin. The polypeptide is Probable phosphorylase b kinase regulatory subunit alpha (Caenorhabditis elegans).